Here is a 328-residue protein sequence, read N- to C-terminus: Protease HtpX homolog (328 aa).

A run of 2 helical transmembrane segments spans residues 6–26 and 28–48; these read TAML…LIGG and SGMM…YWNS. Histidine 130 contacts Zn(2+). The active site involves glutamate 131. Residue histidine 134 participates in Zn(2+) binding. 2 helical membrane-spanning segments follow: residues 145-165 and 172-192; these read ITAT…FFGG and PLGA…AMLV. Glutamate 201 is a Zn(2+) binding site. The tract at residues 279-328 is disordered; sequence QYGGGTGPSVGTPTRSGSTGPAMTANPERKSRSVPNTGRGGSQPPKGPWS. A compositionally biased stretch (low complexity) spans 287 to 299; the sequence is SVGTPTRSGSTGP.

Belongs to the peptidase M48B family. Zn(2+) is required as a cofactor.

It is found in the cell inner membrane. This chain is Protease HtpX homolog, found in Rhizobium rhizogenes (strain K84 / ATCC BAA-868) (Agrobacterium radiobacter).